Consider the following 84-residue polypeptide: U8-theraphotoxin-Hhn1c 2 (84 aa).

A signal peptide spans 1 to 21; it reads MKVVLLVCLVWMMAMMELVSC. 5 cysteine pairs are disulfide-bonded: C23–C35, C29–C44, C34–C67, C54–C75, and C69–C81.

This sequence belongs to the AVIT (prokineticin) family. As to expression, expressed by the venom gland.

The protein resides in the secreted. The chain is U8-theraphotoxin-Hhn1c 2 from Cyriopagopus hainanus (Chinese bird spider).